The chain runs to 242 residues: Probable septum site-determining protein MinC (242 aa).

It belongs to the MinC family. Interacts with MinD and FtsZ.

Its function is as follows. Cell division inhibitor that blocks the formation of polar Z ring septums. Rapidly oscillates between the poles of the cell to destabilize FtsZ filaments that have formed before they mature into polar Z rings. Prevents FtsZ polymerization. The polypeptide is Probable septum site-determining protein MinC (Buchnera aphidicola subsp. Schizaphis graminum (strain Sg)).